A 180-amino-acid chain; its full sequence is Large ribosomal subunit protein uL5 (180 aa).

It belongs to the universal ribosomal protein uL5 family. In terms of assembly, part of the 50S ribosomal subunit; part of the 5S rRNA/L5/L18/L25 subcomplex. Contacts the 5S rRNA and the P site tRNA. Forms a bridge to the 30S subunit in the 70S ribosome.

Functionally, this is one of the proteins that bind and probably mediate the attachment of the 5S RNA into the large ribosomal subunit, where it forms part of the central protuberance. In the 70S ribosome it contacts protein S13 of the 30S subunit (bridge B1b), connecting the 2 subunits; this bridge is implicated in subunit movement. Contacts the P site tRNA; the 5S rRNA and some of its associated proteins might help stabilize positioning of ribosome-bound tRNAs. This chain is Large ribosomal subunit protein uL5, found in Xanthomonas oryzae pv. oryzae (strain MAFF 311018).